We begin with the raw amino-acid sequence, 798 residues long: MNLQLIFWIGLISSVCCVFGQADENRCLKANAKSCGECIQAGPNCGWCTNSTFLQEGMPTSARCDDLEALKKKGCHPNDIENPRGSKDIKKNKNVTNRSKGTAEKLQPEDITQIQPQQLVLQLRSGEPQTFTLKFKRAEDYPIDLYYLMDLSYSMKDDLENVKSLGTDLMNEMRRITSDFRIGFGSFVEKTVMPYISTTPAKLRNPCTNEQNCTSPFSYKNVLSLTDKGEVFNELVGKQRISGNLDSPEGGFDAIMQVAVCGSLIGWRNVTRLLVFSTDAGFHFAGDGKLGGIVLPNDGQCHLENDVYTMSHYYDYPSIAHLVQKLSENNIQTIFAVTEEFQPVYKELKNLIPKSAVGTLSANSSNVIQLIIDAYNSLSSEVILENSKLPEGVTINYKSYCKNGVNGTGENGRKCSNISIGDEVQFEISITANKCPNKNSETIKIKPLGFTEEVEIILQFICECECQGEGIPGSPKCHDGNGTFECGACRCNEGRVGRHCECSTDEVNSEDMDAYCRKENSSEICSNNGECVCGQCVCRKRDNTNEIYSGKFCECDNFNCDRSNGLICGGNGVCKCRVCECNPNYTGSACDCSLDTTSCMAVNGQICNGRGVCECGACKCTDPKFQGPTCEMCQTCLGVCAEHKECVQCRAFNKGEKKDTCAQECSHFNITKVENRDKLPQPGQVDPLSHCKEKDVDDCWFYFTYSVNGNNEATVHVVETPECPTGPDIIPIVAGVVAGIVLIGLALLLIWKLLMIIHDRREFAKFEKEKMNAKWDTGENPIYKSAVTTVVNPKYEGK.

A signal peptide spans 1–20 (MNLQLIFWIGLISSVCCVFG). At 21-728 (QADENRCLKA…ETPECPTGPD (708 aa)) the chain is on the extracellular side. In terms of domain architecture, PSI spans 26 to 76 (RCLKANAKSCGECIQAGPNCGWCTNSTFLQEGMPTSARCDDLEALKKKGCH). Disulfide bonds link cysteine 27–cysteine 45, cysteine 35–cysteine 464, cysteine 38–cysteine 64, cysteine 48–cysteine 75, cysteine 207–cysteine 213, cysteine 261–cysteine 301, cysteine 401–cysteine 415, cysteine 435–cysteine 462, cysteine 466–cysteine 486, cysteine 477–cysteine 489, cysteine 491–cysteine 500, cysteine 502–cysteine 533, cysteine 516–cysteine 531, cysteine 525–cysteine 536, cysteine 538–cysteine 553, cysteine 555–cysteine 576, cysteine 560–cysteine 574, cysteine 568–cysteine 579, cysteine 581–cysteine 590, cysteine 592–cysteine 615, cysteine 599–cysteine 613, cysteine 607–cysteine 618, cysteine 620–cysteine 630, cysteine 633–cysteine 636, cysteine 640–cysteine 691, cysteine 646–cysteine 665, cysteine 649–cysteine 661, and cysteine 699–cysteine 723. The N-linked (GlcNAc...) asparagine glycan is linked to asparagine 50. Residues 75–91 (CHPNDIENPRGSKDIKK) show a composition bias toward basic and acidic residues. Residues 75-105 (CHPNDIENPRGSKDIKKNKNVTNRSKGTAEK) are disordered. N-linked (GlcNAc...) asparagine glycans are attached at residues asparagine 94 and asparagine 97. Positions 140 to 378 (DYPIDLYYLM…QLIIDAYNSL (239 aa)) constitute a VWFA domain. Mg(2+) is bound by residues serine 152 and serine 154. Positions 154, 157, 158, and 189 each coordinate Ca(2+). The CX3CL1-binding stretch occupies residues 207–213 (CTNEQNC). An N-linked (GlcNAc...) asparagine glycan is attached at asparagine 212. Ca(2+) is bound by residues asparagine 244, aspartate 246, proline 248, and glutamate 249. Glutamate 249 is a Mg(2+) binding site. Residue asparagine 269 is glycosylated (N-linked (GlcNAc...) asparagine). A CX3CL1-binding region spans residues 295-314 (LPNDGQCHLENDVYTMSHYY). Alanine 362 is a binding site for Ca(2+). Asparagine 363, asparagine 406, and asparagine 417 each carry an N-linked (GlcNAc...) asparagine glycan. The tract at residues 383 to 465 (ILENSKLPEG…IILQFICECE (83 aa)) is interaction with TMEM182. I-EGF domains are found at residues 466-501 (CQGE…RHCE), 502-554 (CSTD…KFCE), 555-591 (CDNF…SACD), and 592-631 (CSLD…PTCE). N-linked (GlcNAc...) asparagine glycosylation is present at asparagine 481. Asparagine 520 carries N-linked (GlcNAc...) asparagine glycosylation. A glycan (N-linked (GlcNAc...) asparagine) is linked at asparagine 584. The N-linked (GlcNAc...) asparagine glycan is linked to asparagine 669. A helical transmembrane segment spans residues 729–749 (IIPIVAGVVAGIVLIGLALLL). Over 750 to 798 (IWKLLMIIHDRREFAKFEKEKMNAKWDTGENPIYKSAVTTVVNPKYEGK) the chain is Cytoplasmic. Residues 762 to 767 (EFAKFE) are signal for sorting from recycling endosomes; interaction with ACAP1. Threonine 777 is modified (phosphothreonine). Tyrosine 783 is modified (phosphotyrosine). Serine 785 carries the phosphoserine modification. An interaction with ITGB1BP1 region spans residues 785–792 (SAVTTVVN). Residue threonine 789 is modified to Phosphothreonine. Lysine 794 bears the N6-acetyllysine; alternate mark. Residue lysine 794 forms a Glycyl lysine isopeptide (Lys-Gly) (interchain with G-Cter in SUMO1); alternate linkage.

Belongs to the integrin beta chain family. As to quaternary structure, interacts with seprase FAP (seprase); the interaction occurs at the cell surface of invadopodia membrane in a collagen-dependent manner. Heterodimer of an alpha and a beta subunit. Beta-1 associates with either alpha-1, alpha-2, alpha-3, alpha-4, alpha-5, alpha-6, alpha-7, alpha-8, alpha-9, alpha-10, alpha-11 or alpha-V. ITGA6:ITGB1 is found in a complex with CD9; interaction takes place in oocytes and is involved in sperm-egg fusion. Binds LGALS3BP and NMRK2, when associated with alpha-7, but not with alpha-5. Interacts with FLNB, FLNC and RANBP9. Interacts with KRT1 in the presence of RACK1 and SRC. Interacts with JAML; integrin alpha-4/beta-1 may regulate leukocyte to endothelial cells adhesion by controlling JAML homodimerization. Interacts with RAB21. Interacts (via the cytoplasmic region) with RAB25 (via the hypervariable C-terminal region). Interacts with MYO10. Interacts with ITGB1BP1 (via C-terminal region); the interaction is a prerequisite for focal adhesion disassembly. Interacts with TLN1; the interaction is prevented by competitive binding of ITGB1BP1. Interacts with ACAP1; required for ITGB1 recycling. Interacts with ASAP3. Interacts with FERMT2; the interaction is inhibited in presence of ITGB1BP1. Interacts with DAB2. Interacts with FGR and HCK. Interacts with EMP2; the interaction may be direct or indirect and ITGB1 has a heterodimer form. ITGA5:ITGB1 interacts with CCN3. ITGA4:ITGB1 is found in a ternary complex with CX3CR1 and CX3CL1. ITGA5:ITGB1 interacts with FBN1. ITGA5:ITGB1 interacts with IL1B. Interacts with MDK. ITGA4:ITGB1 interacts with MDK; this interaction mediates MDK-induced osteoblast cells migration through PXN phosphorylation. ITGA6:ITGB1 interacts with MDK; this interaction mediates MDK-induced neurite-outgrowth. ITGA5:ITGB1 interacts with ACE2. Interacts with TMEM182 and LAMB1. Interacts with tensin TNS3; TNS3 also interacts with PEAK1, thus acting as an adapter molecule to bridge the association of PEAK1 with ITGB1. Interacts with tensin TNS4; the interaction displaces tensin TNS3 from the ITGB1 cytoplasmic tail and promotes ITGB1 stability. Integrin ITGA9:ITGB1 interacts with SPP1/OPN (via N-terminus). Integrin ITGA9:ITGB1 interacts with TNC/TNFN3 (via the 3rd Fibronectin type-III domain). Integrins ITGA4:ITGB1 and ITGA9:ITGB1 interact with SVEP1 (via Sushi domain 21); thereby inhibit Ca(2+) intracellular signaling and as a result repress vasocontraction. ITGA4:ITGB1 and ITGA5:ITGB1 interacts with SELP. Interacts with CD248. ITGA5:ITGB1 interacts with IGFBP1. ITGA4:ITGB1 interacts with BCAM. Interacts with ADGRG6. Interacts with the C-terminal region of FLNC. Interacts with filamin FLNA isoform 3/VAR-1. In terms of assembly, interacts with ACE2. Interacts with alpha-7B in cardiomyocytes of adult heart and alpha-7A and alpha-7B in adult skeletal muscle. Interacts with filamin FLNA isoform 3/VAR-1.

The protein localises to the cell membrane. Its subcellular location is the cell projection. The protein resides in the invadopodium membrane. It localises to the ruffle membrane. It is found in the recycling endosome. The protein localises to the melanosome. Its subcellular location is the lamellipodium. The protein resides in the ruffle. It localises to the cell junction. It is found in the focal adhesion. The protein localises to the sarcolemma. In terms of biological role, integrins alpha-1/beta-1, alpha-2/beta-1, alpha-10/beta-1 and alpha-11/beta-1 are receptors for collagen. Integrins alpha-1/beta-1 and alpha-2/beta-2 recognize the proline-hydroxylated sequence G-F-P-G-E-R in collagen. Integrins alpha-2/beta-1, alpha-3/beta-1, alpha-4/beta-1, alpha-5/beta-1, alpha-8/beta-1, alpha-10/beta-1, alpha-11/beta-1 and alpha-V/beta-1 are receptors for fibronectin. Alpha-4/beta-1 recognizes one or more domains within the alternatively spliced CS-1 and CS-5 regions of fibronectin. Integrin alpha-5/beta-1 is a receptor for fibrinogen. Integrin alpha-1/beta-1, alpha-2/beta-1, alpha-6/beta-1 and alpha-7/beta-1 are receptors for lamimin. Integrin alpha-6/beta-1 (ITGA6:ITGB1) is present in oocytes and is involved in sperm-egg fusion. Integrin alpha-4/beta-1 is a receptor for VCAM1 and recognizes the sequence Q-I-D-S in VCAM1. Integrin alpha-9/beta-1 is a receptor for VCAM1, cytotactin and osteopontin. It recognizes the sequence A-E-I-D-G-I-E-L in cytotactin. Integrin alpha-3/beta-1 is a receptor for epiligrin, thrombospondin and CSPG4. Integrin alpha-3/beta-1 provides a docking site for FAP (seprase) at invadopodia plasma membranes in a collagen-dependent manner and hence may participate in the adhesion, formation of invadopodia and matrix degradation processes, promoting cell invasion. Alpha-3/beta-1 may mediate with LGALS3 the stimulation by CSPG4 of endothelial cells migration. Integrin alpha-V/beta-1 is a receptor for vitronectin. Beta-1 integrins recognize the sequence R-G-D in a wide array of ligands. When associated with alpha-7/beta-1 integrin, regulates cell adhesion and laminin matrix deposition. Involved in promoting endothelial cell motility and angiogenesis. Involved in osteoblast compaction through the fibronectin fibrillogenesis cell-mediated matrix assembly process and the formation of mineralized bone nodules. May be involved in up-regulation of the activity of kinases such as PKC via binding to KRT1. Together with KRT1 and RACK1, serves as a platform for SRC activation or inactivation. Plays a mechanistic adhesive role during telophase, required for the successful completion of cytokinesis. ITGA4:ITGB1 binds to fractalkine (CX3CL1) and may act as its coreceptor in CX3CR1-dependent fractalkine signaling. ITGA4:ITGB1 and ITGA5:ITGB1 bind to PLA2G2A via a site (site 2) which is distinct from the classical ligand-binding site (site 1) and this induces integrin conformational changes and enhanced ligand binding to site 1. ITGA5:ITGB1 acts as a receptor for fibrillin-1 (FBN1) and mediates R-G-D-dependent cell adhesion to FBN1. ITGA5:ITGB1 acts as a receptor for fibronectin FN1 and mediates R-G-D-dependent cell adhesion to FN1. ITGA5:ITGB1 is a receptor for IL1B and binding is essential for IL1B signaling. ITGA5:ITGB3 is a receptor for soluble CD40LG and is required for CD40/CD40LG signaling. Plays an important role in myoblast differentiation and fusion during skeletal myogenesis. ITGA9:ITGB1 may play a crucial role in SVEP1/polydom-mediated myoblast cell adhesion. Integrins ITGA9:ITGB1 and ITGA4:ITGB1 repress PRKCA-mediated L-type voltage-gated channel Ca(2+) influx and ROCK-mediated calcium sensitivity in vascular smooth muscle cells via their interaction with SVEP1, thereby inhibit vasocontraction. The chain is Integrin beta-1 (ITGB1) from Bos taurus (Bovine).